The primary structure comprises 354 residues: Ribosomal RNA large subunit methyltransferase M (354 aa).

Residues Ser183, 216 to 219 (SPGG), Asp235, Asp255, and Asp271 each bind S-adenosyl-L-methionine. The active-site Proton acceptor is Lys300.

It belongs to the class I-like SAM-binding methyltransferase superfamily. RNA methyltransferase RlmE family. RlmM subfamily. Monomer.

The protein resides in the cytoplasm. It carries out the reaction cytidine(2498) in 23S rRNA + S-adenosyl-L-methionine = 2'-O-methylcytidine(2498) in 23S rRNA + S-adenosyl-L-homocysteine + H(+). Its function is as follows. Catalyzes the 2'-O-methylation at nucleotide C2498 in 23S rRNA. In Pseudomonas putida (strain ATCC 700007 / DSM 6899 / JCM 31910 / BCRC 17059 / LMG 24140 / F1), this protein is Ribosomal RNA large subunit methyltransferase M.